Here is a 346-residue protein sequence, read N- to C-terminus: S-adenosylmethionine:tRNA ribosyltransferase-isomerase (346 aa).

It belongs to the QueA family. As to quaternary structure, monomer.

The protein resides in the cytoplasm. The enzyme catalyses 7-aminomethyl-7-carbaguanosine(34) in tRNA + S-adenosyl-L-methionine = epoxyqueuosine(34) in tRNA + adenine + L-methionine + 2 H(+). It participates in tRNA modification; tRNA-queuosine biosynthesis. Transfers and isomerizes the ribose moiety from AdoMet to the 7-aminomethyl group of 7-deazaguanine (preQ1-tRNA) to give epoxyqueuosine (oQ-tRNA). The protein is S-adenosylmethionine:tRNA ribosyltransferase-isomerase of Lysinibacillus sphaericus (strain C3-41).